Reading from the N-terminus, the 209-residue chain is MELSVFNIKGEDTGRKVTLNDAIFGIEPNDHAIYLDVKQYLANQRQGTHKSKERSEVSGSTRKLIRQKGGGGARRGDINSPVLVGGGRVFGPKPRDYEFKLNKKVKSLARKSALSYKAKNNAIVVVEDFTMEAPKTKEFITIAKNLKVADKKLLMVLPEKNNLVYLSARNLEKASVITASELNTYAVLNAVNLVLTESSVAVVEQNFKA.

Residues 44–77 form a disordered region; sequence QRQGTHKSKERSEVSGSTRKLIRQKGGGGARRGD.

Belongs to the universal ribosomal protein uL4 family. Part of the 50S ribosomal subunit.

Its function is as follows. One of the primary rRNA binding proteins, this protein initially binds near the 5'-end of the 23S rRNA. It is important during the early stages of 50S assembly. It makes multiple contacts with different domains of the 23S rRNA in the assembled 50S subunit and ribosome. Forms part of the polypeptide exit tunnel. The sequence is that of Large ribosomal subunit protein uL4 from Parabacteroides distasonis (strain ATCC 8503 / DSM 20701 / CIP 104284 / JCM 5825 / NCTC 11152).